The primary structure comprises 230 residues: MTEQLNTSQKRAVILLSGGLDSATVVAMARAEGYACYTMSFDYGQRSHAELHAAARVARDLGVVEHKVIGLNLNGMGGSALTDTSIDIPEELGEGIPVTYVPARNTVFLSLALGWAEVLGARDIFIGVNAVDYSGYPDCRPEFIESFERMANLATKAGVEGNGFRIQAPLQNLSKAQIVQAGVKLGVDYGLTVSCYQADDDGRACGKCDSCRLRAEGFAAAGISDPTRYF.

Position 16-26 (Leu16–Val26) interacts with ATP. Positions 195, 205, 208, and 211 each coordinate Zn(2+).

The protein belongs to the QueC family. Requires Zn(2+) as cofactor.

The enzyme catalyses 7-carboxy-7-deazaguanine + NH4(+) + ATP = 7-cyano-7-deazaguanine + ADP + phosphate + H2O + H(+). It functions in the pathway purine metabolism; 7-cyano-7-deazaguanine biosynthesis. Functionally, catalyzes the ATP-dependent conversion of 7-carboxy-7-deazaguanine (CDG) to 7-cyano-7-deazaguanine (preQ(0)). The sequence is that of 7-cyano-7-deazaguanine synthase from Pseudomonas fluorescens (strain Pf0-1).